A 146-amino-acid polypeptide reads, in one-letter code: Ribosome-binding factor A (146 aa).

The segment at 122–146 is disordered; it reads QQQFGSVDDVTENDIDEADDTEGKA. Residues 130-146 are compositionally biased toward acidic residues; the sequence is DVTENDIDEADDTEGKA.

The protein belongs to the RbfA family. As to quaternary structure, monomer. Binds 30S ribosomal subunits, but not 50S ribosomal subunits or 70S ribosomes.

The protein localises to the cytoplasm. One of several proteins that assist in the late maturation steps of the functional core of the 30S ribosomal subunit. Associates with free 30S ribosomal subunits (but not with 30S subunits that are part of 70S ribosomes or polysomes). Required for efficient processing of 16S rRNA. May interact with the 5'-terminal helix region of 16S rRNA. In Shewanella sp. (strain MR-7), this protein is Ribosome-binding factor A.